Consider the following 670-residue polypeptide: Pescadillo homolog (670 aa).

Residues 292 to 321 (GANQAQAKVKEAESKRSLMEEELLKVRELF) adopt a coiled-coil conformation. The BRCT domain maps to 316-402 (KVRELFRGLT…QMLPVTGYRI (87 aa)). Positions 643-670 (RQRAEAKGKKLKEKKADNPYKKLPKWVQ) are disordered. Basic and acidic residues predominate over residues 644–662 (QRAEAKGKKLKEKKADNPY).

This sequence belongs to the pescadillo family.

It is found in the nucleus. The protein resides in the nucleolus. It localises to the nucleoplasm. Its function is as follows. Required for maturation of ribosomal RNAs and formation of the large ribosomal subunit. This is Pescadillo homolog from Leishmania braziliensis.